The primary structure comprises 927 residues: Dual serine/threonine and tyrosine protein kinase (927 aa).

Residues 1–21 (MEADGQSWAGESVSGPGPGGG) are disordered. Positions 393–429 (RKKENELYESLMNIANRKQEEMKDMIVETLNTMKEEL) form a coiled coil. Residues 650–904 (PKLGQELGRG…PLLGIVQPML (255 aa)) form the Protein kinase domain. Residues 656 to 664 (LGRGQYGVV) and K679 each bind ATP. D775 serves as the catalytic Proton acceptor.

This sequence belongs to the protein kinase superfamily. Ser/Thr protein kinase family. Expressed in brain, heart, skeletal muscle, kidney and lung. Expressed in maturing tubular epithelia, with the most prominent expression in the medulla and the papilla. Expressed in thin ascending limb of the loop of Henle and the distal convoluted tubule. Expressed in all layers of transitional ureteric epithelium and in the ureteric smooth-muscle cells (at protein level). Widely expressed. Highly expressed in many brain regions, including in cerebellum, olfactory, hippocampus and cerebral cortex.

It is found in the cytoplasm. The protein resides in the cell membrane. Its subcellular location is the apical cell membrane. It localises to the basolateral cell membrane. The protein localises to the cell junction. The enzyme catalyses L-seryl-[protein] + ATP = O-phospho-L-seryl-[protein] + ADP + H(+). It catalyses the reaction L-threonyl-[protein] + ATP = O-phospho-L-threonyl-[protein] + ADP + H(+). It carries out the reaction L-tyrosyl-[protein] + ATP = O-phospho-L-tyrosyl-[protein] + ADP + H(+). Its function is as follows. Acts as a positive regulator of ERK phosphorylation downstream of fibroblast growth factor-receptor activation. Involved in the regulation of both caspase-dependent apoptosis and caspase-independent cell death. In the skin, it plays a predominant role in suppressing caspase-dependent apoptosis in response to UV stress in a range of dermal cell types. This is Dual serine/threonine and tyrosine protein kinase (Dstyk) from Mus musculus (Mouse).